Consider the following 610-residue polypeptide: Autophagy-related protein 22-1 (610 aa).

A disordered region spans residues 1–29 (MIFTSTPPAPPPADAQQRQPRYPGEDTTP). Residues 41 to 61 (YGIAAEVFAVCGVGSFLPLTL) traverse the membrane as a helical segment. Asn90 carries an N-linked (GlcNAc...) asparagine glycan. The next 3 membrane-spanning stretches (helical) occupy residues 120–140 (SFAMYTFSLAVLVQALTLISF), 153–173 (LLLTFGLIGSVSSMLFVFISP), and 177–197 (ILGAILVVIGVTCLGSSFVVL). The interval 216 to 242 (KTEGEELPHLDSSGEYTRSGSFNRGDN) is disordered. The span at 229-239 (GEYTRSGSFNR) shows a compositional bias: polar residues. 4 consecutive transmembrane segments (helical) span residues 277–297 (GVGLGYCAAVLVQVLSILLLF), 310–330 (TLPLRFVLLLVGIWWFSFTVV), 379–399 (VVIFLIAWFLLSDAMATVSGT), and 415–435 (VGLLSITATLSGMTGAFLWPV). The N-linked (GlcNAc...) asparagine glycan is linked to Asn445. 4 consecutive transmembrane segments (helical) span residues 450-470 (LCIALFEIIPLYGMLAYIPLV), 485-507 (FPLGIVHGLVSGGLSSYCRSFFG), 527-547 (KGSSFIGPAVVGVLIDATGQV), and 550-570 (GFFFIAVLIVLPIPLIWMVNA). Positions 586–610 (KSHGENSSEFGHPSEEAEGLLARNP) are disordered. Asn591 is a glycosylation site (N-linked (GlcNAc...) asparagine).

The protein belongs to the ATG22 family.

It localises to the vacuole membrane. Vacuolar effluxer which mediate the efflux of amino acids resulting from autophagic degradation. The release of autophagic amino acids allows the maintenance of protein synthesis and viability during nitrogen starvation. In Aspergillus clavatus (strain ATCC 1007 / CBS 513.65 / DSM 816 / NCTC 3887 / NRRL 1 / QM 1276 / 107), this protein is Autophagy-related protein 22-1 (atg22-1).